The sequence spans 707 residues: Protein kinase C theta type (707 aa).

The 107-residue stretch at 1–107 folds into the C2 domain; the sequence is MSPFLRIGLS…KNNGRTEIWL (107 aa). Phosphotyrosine; by LCK is present on tyrosine 90. A Phorbol-ester/DAG-type 1 zinc finger spans residues 159–209; that stretch reads CHEFTATFFPQPTFCSVCHEFVWGLNKQGYQCRRCNAAIHKKCIDKVIAKC. Threonine 219 bears the Phosphothreonine; by autocatalysis mark. The segment at 231-281 adopts a Phorbol-ester/DAG-type 2 zinc-finger fold; the sequence is PHRFKVYNYKSPTFCEHCGTLLWGLARQGLKCDACGMNVHHRCQTKVANLC. Serine 348 bears the Phosphoserine mark. Positions 380–634 constitute a Protein kinase domain; sequence FILHKMLGKG…RGDIRQHPLF (255 aa). ATP-binding positions include 386 to 394 and lysine 409; that span reads LGKGSFGKV. Residue aspartate 504 is the Proton acceptor of the active site. Phosphothreonine; by PDPK1 is present on threonine 538. The AGC-kinase C-terminal domain maps to 635 to 706; sequence REINWEELER…INPGMETLIC (72 aa). Phosphoserine is present on residues serine 676 and serine 685. Serine 695 bears the Phosphoserine; by autocatalysis mark.

Belongs to the protein kinase superfamily. AGC Ser/Thr protein kinase family. PKC subfamily. Part of a membrane raft complex composed at least of BCL10, CARD11, MALT1 and IKBKB. Interacts with GLRX3 (via N-terminus). Interacts with ECT2. Interacts with CCDC88A/GIV; the interaction leads to phosphorylation of CCDC88A and inhibition of its guanine nucleotide exchange factor activity. Interacts with CD28. Requires Mg(2+) as cofactor. Autophosphorylation at Thr-219 is required for targeting to the TCR and cellular function of PRKCQ upon antigen receptor ligation. Following TCR stimulation, phosphorylated at Tyr-90 and Ser-685.

It localises to the cytoplasm. The protein localises to the cell membrane. It catalyses the reaction L-seryl-[protein] + ATP = O-phospho-L-seryl-[protein] + ADP + H(+). The enzyme catalyses L-threonyl-[protein] + ATP = O-phospho-L-threonyl-[protein] + ADP + H(+). With respect to regulation, novel PKCs (PRKCD, PRKCE, PRKCH and PRKCQ) are calcium-insensitive, but activated by diacylglycerol (DAG) and phosphatidylserine. Three specific sites; Thr-538 (activation loop of the kinase domain), Ser-676 (turn motif) and Ser-695 (hydrophobic region), need to be phosphorylated for its full activation. Its function is as follows. Calcium-independent, phospholipid- and diacylglycerol (DAG)-dependent serine/threonine-protein kinase that mediates non-redundant functions in T-cell receptor (TCR) signaling, including T-cells activation, proliferation, differentiation and survival, by mediating activation of multiple transcription factors such as NF-kappa-B, JUN, NFATC1 and NFATC2. In TCR-CD3/CD28-co-stimulated T-cells, is required for the activation of NF-kappa-B and JUN, which in turn are essential for IL2 production, and participates in the calcium-dependent NFATC1 and NFATC2 transactivation. Mediates the activation of the canonical NF-kappa-B pathway (NFKB1) by direct phosphorylation of CARD11 on several serine residues, inducing CARD11 association with lipid rafts and recruitment of the BCL10-MALT1 complex, which then activates IKK complex, resulting in nuclear translocation and activation of NFKB1. May also play an indirect role in activation of the non-canonical NF-kappa-B (NFKB2) pathway. In the signaling pathway leading to JUN activation, acts by phosphorylating the mediator STK39/SPAK and may not act through MAP kinases signaling. Plays a critical role in TCR/CD28-induced NFATC1 and NFATC2 transactivation by participating in the regulation of reduced inositol 1,4,5-trisphosphate generation and intracellular calcium mobilization. After costimulation of T-cells through CD28 can phosphorylate CBLB and is required for the ubiquitination and subsequent degradation of CBLB, which is a prerequisite for the activation of TCR. During T-cells differentiation, plays an important role in the development of T-helper 2 (Th2) cells following immune and inflammatory responses, and, in the development of inflammatory autoimmune diseases, is necessary for the activation of IL17-producing Th17 cells. May play a minor role in Th1 response. Upon TCR stimulation, mediates T-cell protective survival signal by phosphorylating BAD, thus protecting T-cells from BAD-induced apoptosis, and by up-regulating BCL-X(L)/BCL2L1 levels through NF-kappa-B and JUN pathways. In platelets, regulates signal transduction downstream of the ITGA2B, CD36/GP4, F2R/PAR1 and F2RL3/PAR4 receptors, playing a positive role in 'outside-in' signaling and granule secretion signal transduction. May relay signals from the activated ITGA2B receptor by regulating the uncoupling of WASP and WIPF1, thereby permitting the regulation of actin filament nucleation and branching activity of the Arp2/3 complex. May mediate inhibitory effects of free fatty acids on insulin signaling by phosphorylating IRS1, which in turn blocks IRS1 tyrosine phosphorylation and downstream activation of the PI3K/AKT pathway. Phosphorylates MSN (moesin) in the presence of phosphatidylglycerol or phosphatidylinositol. Phosphorylates PDPK1 at 'Ser-504' and 'Ser-532' and negatively regulates its ability to phosphorylate PKB/AKT1. Phosphorylates CCDC88A/GIV and inhibits its guanine nucleotide exchange factor activity. Phosphorylates and activates LRRK1, which phosphorylates RAB proteins involved in intracellular trafficking. The sequence is that of Protein kinase C theta type (Prkcq) from Rattus norvegicus (Rat).